The sequence spans 78 residues: Ubiquitin-like protein 1 (78 aa).

The protein belongs to the ubiquitin family.

The polypeptide is Ubiquitin-like protein 1 (ubl1) (Schizosaccharomyces pombe (strain 972 / ATCC 24843) (Fission yeast)).